Here is a 119-residue protein sequence, read N- to C-terminus: Large ribosomal subunit protein uL18 (119 aa).

It belongs to the universal ribosomal protein uL18 family. As to quaternary structure, part of the 50S ribosomal subunit; part of the 5S rRNA/L5/L18/L25 subcomplex. Contacts the 5S and 23S rRNAs.

In terms of biological role, this is one of the proteins that bind and probably mediate the attachment of the 5S RNA into the large ribosomal subunit, where it forms part of the central protuberance. In Clostridium botulinum (strain ATCC 19397 / Type A), this protein is Large ribosomal subunit protein uL18.